We begin with the raw amino-acid sequence, 343 residues long: Phosphate acyltransferase (343 aa).

It belongs to the PlsX family. In terms of assembly, homodimer. Probably interacts with PlsY.

The protein localises to the cytoplasm. The catalysed reaction is a fatty acyl-[ACP] + phosphate = an acyl phosphate + holo-[ACP]. The protein operates within lipid metabolism; phospholipid metabolism. Catalyzes the reversible formation of acyl-phosphate (acyl-PO(4)) from acyl-[acyl-carrier-protein] (acyl-ACP). This enzyme utilizes acyl-ACP as fatty acyl donor, but not acyl-CoA. This chain is Phosphate acyltransferase, found in Coxiella burnetii (strain Dugway 5J108-111).